Consider the following 395-residue polypeptide: S-adenosylmethionine synthase (395 aa).

His-18 lines the ATP pocket. Residue Asp-20 coordinates Mg(2+). Position 46 (Glu-46) interacts with K(+). Glu-59 and Gln-103 together coordinate L-methionine. The flexible loop stretch occupies residues 103–113; that stretch reads QSADIAVGVDS. ATP contacts are provided by residues 170–172, 235–236, Asp-244, 250–251, Ala-267, and Lys-271; these read DAK, KF, and RK. Asp-244 is a binding site for L-methionine. Lys-275 is a binding site for L-methionine.

The protein belongs to the AdoMet synthase family. In terms of assembly, homotetramer; dimer of dimers. Mg(2+) serves as cofactor. The cofactor is K(+).

It localises to the cytoplasm. It carries out the reaction L-methionine + ATP + H2O = S-adenosyl-L-methionine + phosphate + diphosphate. The protein operates within amino-acid biosynthesis; S-adenosyl-L-methionine biosynthesis; S-adenosyl-L-methionine from L-methionine: step 1/1. Catalyzes the formation of S-adenosylmethionine (AdoMet) from methionine and ATP. The overall synthetic reaction is composed of two sequential steps, AdoMet formation and the subsequent tripolyphosphate hydrolysis which occurs prior to release of AdoMet from the enzyme. In Granulibacter bethesdensis (strain ATCC BAA-1260 / CGDNIH1), this protein is S-adenosylmethionine synthase.